Consider the following 283-residue polypeptide: Quinate/shikimate dehydrogenase (NAD(+)) (283 aa).

The shikimate site is built by Ser-17, Thr-69, Lys-73, Asn-94, and Asp-110. L-quinate is bound by residues 17–19 (SRT), Thr-69, Lys-73, Asn-94, and Asp-110. Lys-73 acts as the Proton acceptor in catalysis. Residues 137 to 138 (GV), Asp-158, Arg-163, 203 to 206 (PMGM), Ala-213, Val-228, and Gly-251 contribute to the NAD(+) site. Gln-258 provides a ligand contact to shikimate. Gln-258 lines the L-quinate pocket.

Belongs to the shikimate dehydrogenase family. In terms of assembly, homodimer.

The enzyme catalyses L-quinate + NAD(+) = 3-dehydroquinate + NADH + H(+). It catalyses the reaction shikimate + NAD(+) = 3-dehydroshikimate + NADH + H(+). The protein operates within metabolic intermediate biosynthesis; chorismate biosynthesis; chorismate from D-erythrose 4-phosphate and phosphoenolpyruvate: step 4/7. It participates in aromatic compound metabolism; 3,4-dihydroxybenzoate biosynthesis; 3-dehydroquinate from D-quinate (NAD(+) route). Involved in the biosynthesis of the chorismate, which leads to the biosynthesis of aromatic amino acids, and plays a key role in the quinate degradation pathway. Catalyzes the NAD(+)-dependent oxidation of both quinate and shikimate to 3-dehydroquinate and 3-dehydroshikimate, respectively. The protein is Quinate/shikimate dehydrogenase (NAD(+)) of Corynebacterium glutamicum (strain R).